The sequence spans 151 residues: Ribosomal RNA large subunit methyltransferase H (151 aa).

S-adenosyl-L-methionine-binding positions include Gly100 and 119-124; that span reads LSRMTF.

Belongs to the RNA methyltransferase RlmH family. Homodimer.

Its subcellular location is the cytoplasm. It catalyses the reaction pseudouridine(1915) in 23S rRNA + S-adenosyl-L-methionine = N(3)-methylpseudouridine(1915) in 23S rRNA + S-adenosyl-L-homocysteine + H(+). Specifically methylates the pseudouridine at position 1915 (m3Psi1915) in 23S rRNA. This is Ribosomal RNA large subunit methyltransferase H from Thermotoga neapolitana (strain ATCC 49049 / DSM 4359 / NBRC 107923 / NS-E).